The chain runs to 335 residues: Cathepsin B (335 aa).

Positions 1–17 are cleaved as a signal peptide; sequence MWRLLATLSCLLVLTSA. The propeptide at 18–79 is activation peptide; sequence RSSLYFPPLS…QRDAFAADVV (62 aa). Intrachain disulfides connect Cys-93/Cys-122, Cys-105/Cys-150, Cys-141/Cys-207, Cys-142/Cys-146, Cys-179/Cys-211, and Cys-187/Cys-198. Cys-108 is an active-site residue. Asn-192 carries an N-linked (GlcNAc...) asparagine glycan. The residue at position 220 (Lys-220) is an N6-acetyllysine. Residues Cys-227 and Cys-331 are joined by a disulfide bond. Residues His-278 and Asn-298 contribute to the active site. Positions 333 to 335 are excised as a propeptide; that stretch reads HQY.

This sequence belongs to the peptidase C1 family. Dimer of a heavy chain and a light chain cross-linked by a disulfide bond. Interacts with SRPX2. Directly interacts with SHKBP1. In terms of tissue distribution, expressed in myoblasts, the myotube, fibroblasts and fetal muscle (at protein level). Expressed in the spleen (at protein level).

It is found in the lysosome. Its subcellular location is the melanosome. It localises to the secreted. The protein resides in the extracellular space. The protein localises to the apical cell membrane. It carries out the reaction Hydrolysis of proteins with broad specificity for peptide bonds. Preferentially cleaves -Arg-Arg-|-Xaa bonds in small molecule substrates (thus differing from cathepsin L). In addition to being an endopeptidase, shows peptidyl-dipeptidase activity, liberating C-terminal dipeptides.. Functionally, thiol protease which is believed to participate in intracellular degradation and turnover of proteins. Cleaves matrix extracellular phosphoglycoprotein MEPE. Involved in the solubilization of cross-linked TG/thyroglobulin in the thyroid follicle lumen. Has also been implicated in tumor invasion and metastasis. This Bos taurus (Bovine) protein is Cathepsin B (CTSB).